Reading from the N-terminus, the 726-residue chain is Dipeptidyl-peptidase 5 (726 aa).

The signal sequence occupies residues 1–19 (MAAAKWLIASLAFASSGLA). Residues Asn-96 and Asn-252 are each glycosylated (N-linked (GlcNAc...) asparagine). The interval 269 to 291 (AEPINKRNGPRTPQAIEGASSSP) is disordered. The Charge relay system role is filled by Ser-558. Asn-605 carries N-linked (GlcNAc...) asparagine glycosylation. Active-site charge relay system residues include Asp-641 and His-673. Asn-699 carries an N-linked (GlcNAc...) asparagine glycan.

It belongs to the peptidase S9C family.

It localises to the secreted. Its function is as follows. Extracellular dipeptidyl-peptidase which removes N-terminal dipeptides sequentially from polypeptides having unsubstituted N-termini. Contributes to pathogenicity. In Trichophyton equinum (Horse ringworm fungus), this protein is Dipeptidyl-peptidase 5 (DPP5).